A 132-amino-acid polypeptide reads, in one-letter code: Small ribosomal subunit protein uS8c (132 aa).

The protein belongs to the universal ribosomal protein uS8 family. As to quaternary structure, part of the 30S ribosomal subunit.

The protein localises to the plastid. It localises to the chloroplast. One of the primary rRNA binding proteins, it binds directly to 16S rRNA central domain where it helps coordinate assembly of the platform of the 30S subunit. This is Small ribosomal subunit protein uS8c (rps8) from Rhodomonas salina (Cryptomonas salina).